The following is a 212-amino-acid chain: MNFHPELSKISQVTNNIFLSGVFPMEQDPTVIKKLNIKYILACLDRQYVSDAHNAVLIDNPECTILYLPYDDDVSQNLWCKNKNTINLVKYTRTMEEYNCLYKQFQMYQNKPMIEIGYHFINNAVESGNNILIHCMAGISRSVSTLTYYLMKKYNIPYSQAIKYVKDRRSIVNPNDSFKLQLQGYQSKKENFIESDGKKVTDFFKYGQSRLK.

The Tyrosine-protein phosphatase domain maps to 9–191 (KISQVTNNIF…LQGYQSKKEN (183 aa)). The active-site Phosphocysteine intermediate is the Cys-135.

Belongs to the protein-tyrosine phosphatase family. Non-receptor class dual specificity subfamily.

It carries out the reaction O-phospho-L-tyrosyl-[protein] + H2O = L-tyrosyl-[protein] + phosphate. This is Putative tyrosine-protein phosphatase R622 from Acanthamoeba polyphaga mimivirus (APMV).